We begin with the raw amino-acid sequence, 189 residues long: MGRTRDNKAAVIADLKELLSDAQLAFVIDYQGLSVSEITELRNRLRPTGSICKVTKNTFMEMAVQEDDNWQPMTQFLTGSSAFVLVKDDVGGAVRAYQGFKKDTKKTEFRGGVMQGQALNEDQVKAIADLPSKEELMAQIAGALNSIATKLAVGINEVPSSVARGINEVPGSLGRVVNAIANKEEGNAA.

Belongs to the universal ribosomal protein uL10 family. In terms of assembly, part of the ribosomal stalk of the 50S ribosomal subunit. The N-terminus interacts with L11 and the large rRNA to form the base of the stalk. The C-terminus forms an elongated spine to which L12 dimers bind in a sequential fashion forming a multimeric L10(L12)X complex.

Functionally, forms part of the ribosomal stalk, playing a central role in the interaction of the ribosome with GTP-bound translation factors. The chain is Large ribosomal subunit protein uL10 from Rippkaea orientalis (strain PCC 8801 / RF-1) (Cyanothece sp. (strain PCC 8801)).